Reading from the N-terminus, the 337-residue chain is ERI1 exoribonuclease 3 (337 aa).

The Exonuclease domain occupies 146-320; sequence FLVLDFEATC…DDCKNIANIM (175 aa). The Mg(2+) site is built by Asp150, Glu152, and Asp249. Glu152 (proton acceptor) is an active-site residue. Position 152 (Glu152) interacts with AMP. His307 functions as the Proton acceptor in the catalytic mechanism. His307 is an AMP binding site. Asp312 provides a ligand contact to Mg(2+).

As to quaternary structure, interacts with PRNP. Mg(2+) serves as cofactor.

This chain is ERI1 exoribonuclease 3 (ERI3), found in Bos taurus (Bovine).